A 479-amino-acid chain; its full sequence is Sucrose-6-phosphate hydrolase (479 aa).

The interval 1-28 (MTAHDQELRRRAYEEVEKKEPIANSDPH) is disordered. Substrate is bound by residues 40–43 (LLND), Gln-59, 102–103 (YS), 161–162 (RD), and Glu-220. The active site involves Asp-43.

It belongs to the glycosyl hydrolase 32 family.

It carries out the reaction Hydrolysis of terminal non-reducing beta-D-fructofuranoside residues in beta-D-fructofuranosides.. It participates in glycan biosynthesis; sucrose metabolism. This chain is Sucrose-6-phosphate hydrolase (sacA), found in Bacillus subtilis (strain 168).